The chain runs to 308 residues: MPNNKVKENPMSLSPGAKFRLAVKTHHPLQIVGTINPYCAMMAKSIGHQAIYLSGGGIANASYGLPDLGITTLNDVLVDVERITNACDLPLLVDIDTGFGGAFNIARTIKAMEKAGAAAVHMEDQVAQKRCGHRPNKAIVSQQEMVDRVKAAVDARINPEFVIMARTDALAVEGMDSAIERAIACVEAGADMIFPEAMTELKQYEQFSTALRSATGKPVPILANITEFGQTPLYSGEQLAAVNVDMVLYPLSAFRAMNKAAENVYRHLLEHGNQEALLDQMQTRKELYAYLHYHEYEDKLDQLFSQPS.

Substrate is bound at residue 54–56 (SGG). Residues Asp-94 and Asp-96 each coordinate Mg(2+). Residues 131–132 (CG), Arg-166, Glu-196, 224–226 (NIT), Arg-255, and Arg-284 contribute to the substrate site.

This sequence belongs to the isocitrate lyase/PEP mutase superfamily. Methylisocitrate lyase family. In terms of assembly, homotetramer; dimer of dimers. Mg(2+) serves as cofactor.

The enzyme catalyses (2S,3R)-3-hydroxybutane-1,2,3-tricarboxylate = pyruvate + succinate. It participates in organic acid metabolism; propanoate degradation. Functionally, involved in the catabolism of short chain fatty acids (SCFA) via the 2-methylcitrate cycle I (propionate degradation route). Catalyzes the thermodynamically favored C-C bond cleavage reaction of (2R,3S)-2-methylisocitrate to yield pyruvate and succinate via an alpha-carboxy-carbanion intermediate. The protein is 2-methylisocitrate lyase of Vibrio cholerae serotype O1 (strain ATCC 39315 / El Tor Inaba N16961).